The sequence spans 773 residues: MKKLILLFSLFLAPAFSYKENQKINQNFSSNNTSHKRLKRDWIWNRMHIREEIDSPLPHHVGKLTSSVGNKNAMYIIEGESANTIFKVQGYDGDIYAFERLDREKKAEYELTAHIIDRRNNRSLEPPSKFIIKVSDINDNAPIFVQKIFNGSVPEMSRLGTSVTKVTAEDADDPTVAGHATVTYQIIKGNEYFTVDDSGVISTARADLDRESQSAYEIIVKAKDALGLTGESSTATVIIRLTDINDNFPVFKHPSFHFRVPENISVGGEVGRVKVEDIDEPQHRNTKYSFVRGDYRDTFEIIANPFTNEGIIRPKKPLDFEKVAEYRFDIEATDHNVNPAYYKPGGSRSISTITIEVTDVDEPPVFTKLSYEFKVRENDPEIKTLGSVWAHDPDAAKRKIRFARRRASPNGDYVRVSDSGIIQLPKPLDREFSSLYNITVAAQEILEDGRLSDRESHAQVHVIVTDENDNAPELVYPEEPRVCENAAPGKVIIRISATDKDEISPGGFFTYSLTTEDSNFSLTENPDNTANITVKDGQFNRELAKIHYLPVIISDNGNPELSSTNTLVISVCKCNEKGDFTFCEERAKQVGVSVQALVAIFICIFTIIAVIALLILLRKRHKKDLSGLRRNVAEIHEQLVTYDEEGGGEMDTTSYDVSVLNSVRKNGIKPEVVPSAYAQVQKPPGNTTSGAGEMEMMIEVKKDEADNDRDLLPYDTLHIYGYEGAESIAESLSSLESGSSDSDIDYDFLNDWGPRFKMLAELYGSEPNEDFVY.

Positions 1 to 18 are cleaved as a signal peptide; the sequence is MKKLILLFSLFLAPAFSY. Positions 19 to 40 are excised as a propeptide; the sequence is KENQKINQNFSSNNTSHKRLKR. N-linked (GlcNAc...) asparagine glycans are attached at residues N27, N31, and N32. Cadherin domains lie at 39–144, 145–251, 252–366, 367–474, and 474–582; these read KRDW…APIF, VQKI…FPVF, KHPS…PPVF, TKLS…APEL, and LVYP…DFTF. Topologically, residues 41 to 595 are extracellular; it reads DWIWNRMHIR…RAKQVGVSVQ (555 aa). Positions 51, 52, 102, and 104 each coordinate Ca(2+). N121 carries an N-linked (GlcNAc...) asparagine glycan. Residues D136, I137, N138, D139, and N140 each coordinate Ca(2+). The N-linked (GlcNAc...) asparagine glycan is linked to N150. 4 residues coordinate Ca(2+): D170, D172, H179, and D224. 4 N-linked (GlcNAc...) asparagine glycosylation sites follow: N263, N437, N519, and N531. The chain crosses the membrane as a helical span at residues 596 to 617; the sequence is ALVAIFICIFTIIAVIALLILL. The Cytoplasmic portion of the chain corresponds to 618–773; the sequence is RKRHKKDLSG…GSEPNEDFVY (156 aa).

Post-translationally, N-glycosylated. In terms of processing, O-glycosylated.

It is found in the cell junction. The protein localises to the adherens junction. It localises to the cell membrane. The protein resides in the cytoplasm. Functionally, cadherins are calcium-dependent cell adhesion proteins. They preferentially interact with themselves in a homophilic manner in connecting cells; cadherins may thus contribute to the sorting of heterogeneous cell types. This cadherin may play a important role in endothelial cell biology through control of the cohesion and organization of the intercellular junctions. Plays a role in coupling actin fibers to cell junctions in endothelial cells. Associates with CTNND1/p120-catenin to control CADH5 endocytosis. This is Cadherin-5 from Gallus gallus (Chicken).